We begin with the raw amino-acid sequence, 271 residues long: UPF0328 protein ECU09_0020 (271 aa).

It belongs to the UPF0328 family.

The protein is UPF0328 protein ECU09_0020 of Encephalitozoon cuniculi (strain GB-M1) (Microsporidian parasite).